A 467-amino-acid polypeptide reads, in one-letter code: Inactive pancreatic lipase-related protein 1 (467 aa).

Positions 1–17 are cleaved as a signal peptide; it reads MLIFWTITLFLLGAAKG. Cystine bridges form between Cys-21-Cys-27 and Cys-109-Cys-120. Ser-171 serves as the catalytic Nucleophile. Catalysis depends on Asp-194, which acts as the Charge relay system. Residues Glu-205, Arg-208, Asp-210, and Asp-213 each contribute to the Ca(2+) site. Cys-255 and Cys-279 are joined by a disulfide. His-281 serves as the catalytic Charge relay system. 3 cysteine pairs are disulfide-bonded: Cys-303/Cys-314, Cys-317/Cys-322, and Cys-451/Cys-467. A PLAT domain is found at 356–467; it reads WRYGVSITLS…EDTLLTLTPC (112 aa).

It belongs to the AB hydrolase superfamily. Lipase family. Pancreas.

The protein localises to the secreted. In terms of biological role, may function as inhibitor of dietary triglyceride digestion. Lacks detectable lipase activity towards triglycerides, diglycerides, phosphatidylcholine, galactolipids or cholesterol esters (in vitro). This Homo sapiens (Human) protein is Inactive pancreatic lipase-related protein 1 (PNLIPRP1).